A 280-amino-acid polypeptide reads, in one-letter code: Trypsin zeta (280 aa).

The signal sequence occupies residues 1–22 (MSSSWIVGLLAFLVSLVALTQG). Positions 23–38 (LPLLEDLDEKSVPDGR) are cleaved as a propeptide — activation peptide. The 240-residue stretch at 39-278 (IVGGYATDIA…LRPWIDAVLA (240 aa)) folds into the Peptidase S1 domain. Cysteines 72 and 88 form a disulfide. Residues histidine 87 and aspartate 134 each act as charge relay system in the active site. 2 disulfide bridges follow: cysteine 198-cysteine 218 and cysteine 230-cysteine 254. Serine 234 (charge relay system) is an active-site residue.

Belongs to the peptidase S1 family.

It localises to the secreted. The protein resides in the extracellular space. It catalyses the reaction Preferential cleavage: Arg-|-Xaa, Lys-|-Xaa.. This is Trypsin zeta (zetaTry) from Drosophila melanogaster (Fruit fly).